The primary structure comprises 971 residues: MLKLKGEFRTAKGLKDENKKQAQTLVFTDNQVEFKSNKQYHLRQLQQLKKKLLTLQQELEIRTQELQASYRSLLQYQSILEKQTSDLLVLHHHCKLKEDEVILYEEEMGSHSKNTGEKLHLAQEQLALAGDKIVSLERSLNLYRDKYQTSLSNIELLECQVKMLEEELSGLICQDPENKGDHSKVRIYTSPCMIQEHQETLKRLSEVWQKVSEQDDLIQELRNKLACSNSLVLEREEALIKLRADFASYTATHRHPPTSSEDCEDITKILKYLQEQKDSQCLHVEEYQNLVKDLRLELEAVSEQKKKIMKDMMKLELDLHGLREETSCVIEKKDKETVFLQYRLQDLQQQYTESQKLSLKKDKLLQDKDERLNELEKKLTQVQCLFLEKETELEKLQSTTKELDANLQEVRQSTSKIDNEGLRSEIQKLKESLEEAREQLRVSDQNLSQCKDEAHLSANNLEDAHRKLENCLLQDKRKDDVIKDLQSQLQKLQKESSETEEERKNNRQQLLELSSELNEGQRRLSSAEKEKSLLQKTLDEEEKKIDELLHGAKVSEQKQRELTNSLSKLQDELAETKRLLEEKREQLRKSKDQEKALEEEIEALRQESKKKEKMAKEQLRKLEEEKENLQAELSSCSSQLDSSINKYNNSQKVIQELNTEIARQKDSIMILQTQLDSAIQKEKNCFQNMVSKETYEELLRKSGTCQDDLTQALEKLTQATSETKSLQRNLQQTQERKAQLEDEIMAYEERMKKLNMELKKLQGFQQQSELEVHNFDKKLEEMGNQVLQWQRQHQSDLKMLAAKETQLREFQEEMTALKENLLADEKEPSLMPSKPAPKENYRHHRENDQIMCNVEQWAKEQKLANEKLGNKLREQVKYIAKLTGEKDHLHNVMAHLQQENKKLKNEIEEKKLKAGTPRICAKVLGPCKLEPSQKGKLCGALGWRGVCQDPLPKMDLTKYTGVPHCSGSSYC.

6 coiled-coil regions span residues 37-69 (NKQY…LQAS), 117-229 (EKLH…ACSN), 282-325 (LHVE…LREE), 355-680 (QKLS…SAIQ), 706-827 (QDDL…DEKE), and 879-916 (IAKL…KAGT).

Expressed in testis and more specifically in ODF, the sperm tail specific cytoskeletal structure. Also expressed in epididymides and brain.

The protein resides in the cell projection. Its subcellular location is the cilium. It localises to the flagellum. Functionally, required for normal spermatogenesis. It functions as a scaffold protein that attaches the sperm head-tail connecting piece to the nuclear envelope, thus maintaining sperm head and tail integrity. May also be involved in the general organization of cellular cytoskeleton. The chain is Polyamine-modulated factor 1-binding protein 1 (Pmfbp1) from Rattus norvegicus (Rat).